A 176-amino-acid chain; its full sequence is Large ribosomal subunit protein uL16 (176 aa).

It belongs to the universal ribosomal protein uL16 family.

The sequence is that of Large ribosomal subunit protein uL16 from Halobacterium salinarum (strain ATCC 29341 / DSM 671 / R1).